A 533-amino-acid chain; its full sequence is Cytochrome P450 9e2 (533 aa).

Residue Cys-475 coordinates heme.

Belongs to the cytochrome P450 family. Heme serves as cofactor.

Its subcellular location is the endoplasmic reticulum membrane. The protein resides in the microsome membrane. This is Cytochrome P450 9e2 (CYP9E2) from Blattella germanica (German cockroach).